Here is a 399-residue protein sequence, read N- to C-terminus: Coenzyme A biosynthesis bifunctional protein CoaBC (399 aa).

The phosphopantothenoylcysteine decarboxylase stretch occupies residues 1–190 (MQTLAGKKIL…FQPKVLEGKS (190 aa)). The Proton donor role is filled by C159. The interval 191–399 (ILISAGPTRE…KILEKMRELM (209 aa)) is phosphopantothenate--cysteine ligase. CTP is bound by residues D279, K289, 307–310 (PDIV), F326, K340, and K344.

The protein in the N-terminal section; belongs to the HFCD (homo-oligomeric flavin containing Cys decarboxylase) superfamily. This sequence in the C-terminal section; belongs to the PPC synthetase family. Requires Mg(2+) as cofactor. FMN is required as a cofactor.

It catalyses the reaction N-[(R)-4-phosphopantothenoyl]-L-cysteine + H(+) = (R)-4'-phosphopantetheine + CO2. It carries out the reaction (R)-4'-phosphopantothenate + L-cysteine + CTP = N-[(R)-4-phosphopantothenoyl]-L-cysteine + CMP + diphosphate + H(+). The protein operates within cofactor biosynthesis; coenzyme A biosynthesis; CoA from (R)-pantothenate: step 2/5. It functions in the pathway cofactor biosynthesis; coenzyme A biosynthesis; CoA from (R)-pantothenate: step 3/5. Catalyzes two sequential steps in the biosynthesis of coenzyme A. In the first step cysteine is conjugated to 4'-phosphopantothenate to form 4-phosphopantothenoylcysteine. In the second step the latter compound is decarboxylated to form 4'-phosphopantotheine. This is Coenzyme A biosynthesis bifunctional protein CoaBC from Vibrio parahaemolyticus serotype O3:K6 (strain RIMD 2210633).